We begin with the raw amino-acid sequence, 286 residues long: Transcription factor MYB62 (286 aa).

2 consecutive HTH myb-type domains span residues D16–L68 and K69–A123. DNA-binding regions (H-T-H motif) lie at residues W44–L68 and W96–V119.

As to expression, expressed in leaves and flowers.

Its subcellular location is the nucleus. Transcription repressor of phosphate (Pi) starvation-induced genes. Negatively regulates Pi starvation responses via the repression of gibberellic acid (GA) biosynthesis and signaling. Modulates root architecture, phosphatase activity, and Pi uptake and accumulation. The protein is Transcription factor MYB62 of Arabidopsis thaliana (Mouse-ear cress).